A 268-amino-acid chain; its full sequence is Aliphatic sulfonates import ATP-binding protein SsuB 2 (268 aa).

In terms of domain architecture, ABC transporter spans 16 to 230 (VQLRNVVRQF…DSGQAGFQSI (215 aa)). An ATP-binding site is contributed by 48-55 (GASGSGKT).

It belongs to the ABC transporter superfamily. Aliphatic sulfonates importer (TC 3.A.1.17.2) family. The complex is composed of two ATP-binding proteins (SsuB), two transmembrane proteins (SsuC) and a solute-binding protein (SsuA).

The protein resides in the cell inner membrane. It catalyses the reaction ATP + H2O + aliphatic sulfonate-[sulfonate-binding protein]Side 1 = ADP + phosphate + aliphatic sulfonateSide 2 + [sulfonate-binding protein]Side 1.. Its function is as follows. Part of the ABC transporter complex SsuABC involved in aliphatic sulfonates import. Responsible for energy coupling to the transport system. This chain is Aliphatic sulfonates import ATP-binding protein SsuB 2, found in Pseudomonas savastanoi pv. phaseolicola (strain 1448A / Race 6) (Pseudomonas syringae pv. phaseolicola (strain 1448A / Race 6)).